The sequence spans 169 residues: Phosphopantetheine adenylyltransferase (169 aa).

S10 contributes to the substrate binding site. Residues 10–11 and H18 contribute to the ATP site; that span reads SF. Residues K42, T79, and R93 each coordinate substrate. ATP-binding positions include 94-96, E104, and 129-135; these read GLR and VRPITAT.

Belongs to the bacterial CoaD family. In terms of assembly, homohexamer. Mg(2+) is required as a cofactor.

The protein localises to the cytoplasm. It carries out the reaction (R)-4'-phosphopantetheine + ATP + H(+) = 3'-dephospho-CoA + diphosphate. Its pathway is cofactor biosynthesis; coenzyme A biosynthesis; CoA from (R)-pantothenate: step 4/5. Functionally, reversibly transfers an adenylyl group from ATP to 4'-phosphopantetheine, yielding dephospho-CoA (dPCoA) and pyrophosphate. The protein is Phosphopantetheine adenylyltransferase of Rhodopseudomonas palustris (strain TIE-1).